We begin with the raw amino-acid sequence, 489 residues long: Rhamnulokinase (489 aa).

13-17 (ASSGR) is an ATP binding site. Cys68 and Cys222 are disulfide-bonded. Residues Gly83 and 236-238 (HDT) each bind substrate. Asp237 functions as the Proton acceptor in the catalytic mechanism. ATP is bound at residue Thr259. Asn296 lines the substrate pocket. Residue Gln304 participates in ATP binding. Cys353 and Cys370 are disulfide-bonded. Residue Gly402 coordinates ATP. Cys413 and Cys417 form a disulfide bridge.

This sequence belongs to the rhamnulokinase family. Mg(2+) serves as cofactor.

It carries out the reaction L-rhamnulose + ATP = L-rhamnulose 1-phosphate + ADP + H(+). It participates in carbohydrate degradation; L-rhamnose degradation; glycerone phosphate from L-rhamnose: step 2/3. Functionally, involved in the catabolism of L-rhamnose (6-deoxy-L-mannose). Catalyzes the transfer of the gamma-phosphate group from ATP to the 1-hydroxyl group of L-rhamnulose to yield L-rhamnulose 1-phosphate. In Salmonella typhi, this protein is Rhamnulokinase.